The primary structure comprises 472 residues: N(6)-adenine-specific methyltransferase METTL4 (472 aa).

The protein belongs to the MT-A70-like family.

The protein resides in the nucleus. It is found in the cytoplasm. The protein localises to the cytosol. It localises to the mitochondrion matrix. The catalysed reaction is a 2'-O-methyladenosine in U2 snRNA + S-adenosyl-L-methionine = an N(6)-methyl-2'-O-methyladenosine in U2 snRNA + S-adenosyl-L-homocysteine + H(+). It catalyses the reaction a 2'-deoxyadenosine in DNA + S-adenosyl-L-methionine = an N(6)-methyl-2'-deoxyadenosine in DNA + S-adenosyl-L-homocysteine + H(+). Its function is as follows. N(6)-adenine-specific methyltransferase that can methylate both RNAs and DNA. Acts as a N(6)-adenine-specific RNA methyltransferase by catalyzing formation of N6,2'-O-dimethyladenosine (m6A(m)) on internal positions of U2 small nuclear RNA (snRNA): methylates the 6th position of adenine residues with a pre-deposited 2'-O-methylation. Internal m6A(m) methylation of snRNAs regulates RNA splicing. Also able to act as a N(6)-adenine-specific DNA methyltransferase by mediating methylation of DNA on the 6th position of adenine (N(6)-methyladenosine). The existence of N(6)-methyladenosine (m6A) on DNA is however unclear in mammals, and additional evidences are required to confirm the role of the N(6)-adenine-specific DNA methyltransferase activity of METTL4 in vivo. Acts as a regulator of mitochondrial transcript levels and mitochondrial DNA (mtDNA) copy number by mediating mtDNA N(6)-methylation: m6A on mtDNA reduces transcription by repressing TFAM DNA-binding and bending. N(6)-methyladenosine deposition by METTL4 regulates Polycomb silencing by triggering ubiquitination and degradation of sensor proteins ASXL1 and MPND, leading to inactivation of the PR-DUB complex and subsequent preservation of Polycomb silencing. The sequence is that of N(6)-adenine-specific methyltransferase METTL4 from Homo sapiens (Human).